A 339-amino-acid chain; its full sequence is Dihydroorotate dehydrogenase (quinone) (339 aa).

FMN contacts are provided by residues 62 to 66 (AGMDK) and Thr86. Lys66 is a binding site for substrate. 111–115 (NRMGF) is a substrate binding site. Asn139 and Asn172 together coordinate FMN. Asn172 lines the substrate pocket. Ser175 acts as the Nucleophile in catalysis. Residue Asn177 participates in substrate binding. The FMN site is built by Lys217 and Thr245. Position 246–247 (246–247 (NT)) interacts with substrate. FMN contacts are provided by residues Gly268, Gly297, and 318-319 (YS).

It belongs to the dihydroorotate dehydrogenase family. Type 2 subfamily. In terms of assembly, monomer. It depends on FMN as a cofactor.

Its subcellular location is the cell membrane. The catalysed reaction is (S)-dihydroorotate + a quinone = orotate + a quinol. The protein operates within pyrimidine metabolism; UMP biosynthesis via de novo pathway; orotate from (S)-dihydroorotate (quinone route): step 1/1. Its function is as follows. Catalyzes the conversion of dihydroorotate to orotate with quinone as electron acceptor. This Shewanella sp. (strain ANA-3) protein is Dihydroorotate dehydrogenase (quinone).